A 194-amino-acid chain; its full sequence is Protein GrpE (194 aa).

The protein belongs to the GrpE family. In terms of assembly, homodimer.

The protein resides in the cytoplasm. In terms of biological role, participates actively in the response to hyperosmotic and heat shock by preventing the aggregation of stress-denatured proteins, in association with DnaK and GrpE. It is the nucleotide exchange factor for DnaK and may function as a thermosensor. Unfolded proteins bind initially to DnaJ; upon interaction with the DnaJ-bound protein, DnaK hydrolyzes its bound ATP, resulting in the formation of a stable complex. GrpE releases ADP from DnaK; ATP binding to DnaK triggers the release of the substrate protein, thus completing the reaction cycle. Several rounds of ATP-dependent interactions between DnaJ, DnaK and GrpE are required for fully efficient folding. The sequence is that of Protein GrpE from Aliivibrio salmonicida (strain LFI1238) (Vibrio salmonicida (strain LFI1238)).